An 83-amino-acid chain; its full sequence is Parvalbumin beta 3 (83 aa).

2 consecutive EF-hand domains span residues K13–G48 and L52–A83. Ca(2+) is bound by residues D26, D28, S30, F32, E34, E37, D65, D67, D69, M71, and E76.

The protein belongs to the parvalbumin family.

In muscle, parvalbumin is thought to be involved in relaxation after contraction. It binds two calcium ions. The polypeptide is Parvalbumin beta 3 (Macruronus novaezelandiae (Blue grenadier)).